The chain runs to 293 residues: 33 kDa chaperonin (293 aa).

2 cysteine pairs are disulfide-bonded: Cys238–Cys240 and Cys271–Cys274.

Belongs to the HSP33 family. In terms of processing, under oxidizing conditions two disulfide bonds are formed involving the reactive cysteines. Under reducing conditions zinc is bound to the reactive cysteines and the protein is inactive.

It is found in the cytoplasm. In terms of biological role, redox regulated molecular chaperone. Protects both thermally unfolding and oxidatively damaged proteins from irreversible aggregation. Plays an important role in the bacterial defense system toward oxidative stress. The protein is 33 kDa chaperonin of Staphylococcus aureus (strain USA300).